Here is a 553-residue protein sequence, read N- to C-terminus: Glucagon-like peptide 2 receptor (553 aa).

Residues 1–173 (MKLGSSRAGP…SFKQNVDRYA (173 aa)) lie on the Extracellular side of the membrane. 3 cysteine pairs are disulfide-bonded: Cys-83-Cys-105, Cys-96-Cys-137, and Cys-118-Cys-159. N-linked (GlcNAc...) asparagine glycosylation is found at Asn-97, Asn-113, Asn-148, and Asn-162. Residues 174 to 198 (LLSTLQLMYTVGYSFSLISLFLALT) traverse the membrane as a helical segment. Residues 199-210 (LLLFLRKLHCTR) are Cytoplasmic-facing. Residues 211–235 (NYIHMNLFASFILRTLAVLVKDVVF) form a helical membrane-spanning segment. The Extracellular portion of the chain corresponds to 236–261 (YNSYSKRPDNENGWMSYLSEMSTSCR). The helical transmembrane segment at 262–285 (SVQVLLHYFVGANYLWLLVEGLYL) threads the bilayer. Residues 286-299 (HTLLEPTVLPERRL) lie on the Cytoplasmic side of the membrane. A helical membrane pass occupies residues 300 to 321 (WPRYLLLGWAFPVLFVVPWGFA). The Extracellular portion of the chain corresponds to 322-339 (RAHLENTGCWTTNGNKKI). The chain crosses the membrane as a helical span at residues 340-362 (WWIIRGPMMLCVTVNFFIFLKIL). Over 363–386 (KLLISKLKAHQMCFRDYKYRLAKS) the chain is Cytoplasmic. Residues 387–405 (TLVLIPLLGVHEILFSFIT) form a helical membrane-spanning segment. Residues 406–417 (DDQVEGFAKLIR) are Extracellular-facing. Residues 418–438 (LFIQLTLSSFHGFLVALQYGF) traverse the membrane as a helical segment. The Cytoplasmic segment spans residues 439-550 (ANGEVKAELR…ANTMEEILEE (112 aa)).

It belongs to the G-protein coupled receptor 2 family.

The protein localises to the cell membrane. This is a receptor for glucagon-like peptide 2. The activity of this receptor is mediated by G proteins which activate adenylyl cyclase. In Homo sapiens (Human), this protein is Glucagon-like peptide 2 receptor (GLP2R).